We begin with the raw amino-acid sequence, 392 residues long: tRNA (guanine-N(7)-)-methyltransferase (392 aa).

S-adenosyl-L-methionine-binding residues include glutamate 123, glutamate 148, and aspartate 175. 2 residues coordinate substrate: lysine 201 and aspartate 231.

The protein belongs to the class I-like SAM-binding methyltransferase superfamily. TrmB family.

It catalyses the reaction guanosine(46) in tRNA + S-adenosyl-L-methionine = N(7)-methylguanosine(46) in tRNA + S-adenosyl-L-homocysteine. It participates in tRNA modification; N(7)-methylguanine-tRNA biosynthesis. Catalyzes the formation of N(7)-methylguanine at position 46 (m7G46) in tRNA. The protein is tRNA (guanine-N(7)-)-methyltransferase of Campylobacter jejuni (strain RM1221).